The following is a 158-amino-acid chain: Transcriptional repressor NrdR (158 aa).

The disordered stretch occupies residues 1 to 22; the sequence is MRCPYCGSEDTQVKDSRPAEDN. Residues 3-34 fold into a zinc finger; that stretch reads CPYCGSEDTQVKDSRPAEDNTSIRRRRICPDC. The span at 11 to 22 shows a compositional bias: basic and acidic residues; that stretch reads TQVKDSRPAEDN. One can recognise an ATP-cone domain in the interval 49 to 139; the sequence is LMVIKKTGRK…VYRDFSLAED (91 aa).

It belongs to the NrdR family. It depends on Zn(2+) as a cofactor.

Functionally, negatively regulates transcription of bacterial ribonucleotide reductase nrd genes and operons by binding to NrdR-boxes. This is Transcriptional repressor NrdR from Rhizobium etli (strain CIAT 652).